Here is a 668-residue protein sequence, read N- to C-terminus: Myb-like protein W (668 aa).

6 disordered regions span residues 57–124, 246–357, 403–432, 497–546, 561–583, and 631–668; these read LDQF…NESV, EKEK…EEEV, KPKS…TDKG, YTNT…NKER, SMGR…TTTS, and QCEE…DEII. Residues 69–121 show a composition bias toward low complexity; sequence NNNNNNNSNNNNNNNNNNNNNNNNNNNNNNNNNNNNNNNNNNYNNYNNNNNNN. The span at 246 to 268 shows a compositional bias: basic and acidic residues; the sequence is EKEKRKKEREEREEREKQEKQEQ. Positions 293–307 are enriched in low complexity; sequence NNKDNNHNGYYYYYD. Positions 308 to 318 are enriched in acidic residues; it reads NDNDNYNDGDD. Positions 319–335 are enriched in basic and acidic residues; that stretch reads EKEKEKEKEKEKEKENE. The Myb-like domain occupies 344-398; it reads TSMVNSEEWTEEEVNKMNEIRGKLSTADYNYWDKVSAHVKSKTAEQCQRKYNSRF. A compositionally biased stretch (low complexity) spans 501–542; sequence NNNNNNNNNNNNNNNNNNNNNNNNNNNNNNNNNNNNNNNNNN. Positions 632 to 641 are enriched in basic and acidic residues; that stretch reads CEERKKKEDR. Over residues 642-651 the composition is skewed to acidic residues; the sequence is DVDEDGEDDY.

This chain is Myb-like protein W (mybW), found in Dictyostelium discoideum (Social amoeba).